The primary structure comprises 121 residues: Large ribosomal subunit protein bL12 (121 aa).

The protein belongs to the bacterial ribosomal protein bL12 family. Homodimer. Part of the ribosomal stalk of the 50S ribosomal subunit. Forms a multimeric L10(L12)X complex, where L10 forms an elongated spine to which 2 to 4 L12 dimers bind in a sequential fashion. Binds GTP-bound translation factors.

Forms part of the ribosomal stalk which helps the ribosome interact with GTP-bound translation factors. Is thus essential for accurate translation. This is Large ribosomal subunit protein bL12 from Mesomycoplasma hyopneumoniae (strain 7448) (Mycoplasma hyopneumoniae).